Reading from the N-terminus, the 184-residue chain is Peptidyl-tRNA hydrolase (184 aa).

Tyrosine 14 is a tRNA binding site. Histidine 19 (proton acceptor) is an active-site residue. Residues phenylalanine 64, asparagine 66, and asparagine 112 each contribute to the tRNA site.

This sequence belongs to the PTH family. Monomer.

The protein resides in the cytoplasm. It catalyses the reaction an N-acyl-L-alpha-aminoacyl-tRNA + H2O = an N-acyl-L-amino acid + a tRNA + H(+). Hydrolyzes ribosome-free peptidyl-tRNAs (with 1 or more amino acids incorporated), which drop off the ribosome during protein synthesis, or as a result of ribosome stalling. In terms of biological role, catalyzes the release of premature peptidyl moieties from peptidyl-tRNA molecules trapped in stalled 50S ribosomal subunits, and thus maintains levels of free tRNAs and 50S ribosomes. The sequence is that of Peptidyl-tRNA hydrolase from Thermoanaerobacter pseudethanolicus (strain ATCC 33223 / 39E) (Clostridium thermohydrosulfuricum).